A 388-amino-acid polypeptide reads, in one-letter code: 5-hydroxytryptamine receptor 4 (388 aa).

Residues 1–19 are Extracellular-facing; that stretch reads MDKLDANVSSKEGFGSVEK. Residue Asn-7 is glycosylated (N-linked (GlcNAc...) asparagine). Residues 20 to 44 form a helical membrane-spanning segment; the sequence is VVLLTFLSAVILMAILGNLLVMVAV. Topologically, residues 45–54 are cytoplasmic; that stretch reads CRDRQLRKIK. The helical transmembrane segment at 55–78 threads the bilayer; the sequence is TNYFIVSLAFADLLVSVLVMPFGA. At 79–92 the chain is on the extracellular side; sequence IELVQDIWVYGEMF. A helical transmembrane segment spans residues 93–117; sequence CLVRTSLDVLLTTASIFHLCCISLD. A disulfide bond links Cys-93 and Cys-184. Position 100 (Asp-100) interacts with serotonin. Over 118-133 the chain is Cytoplasmic; it reads RYYAICCQPLVYRNKM. Residues 134 to 157 traverse the membrane as a helical segment; that stretch reads TPLRIALMLGGCWVIPMFISFLPI. The Extracellular portion of the chain corresponds to 158-188; sequence MQGWNNIGIVDLIEKRKFNQNSNSTYCVFMV. A helical transmembrane segment spans residues 189-212; the sequence is NKPYAITCSVVAFYIPFLLMVLAY. Over 213–257 the chain is Cytoplasmic; that stretch reads YRIYVTAKEHARQIQVLQRAGAPAEGRPQPADQHSTHRMRTETKA. Residues 258–283 traverse the membrane as a helical segment; it reads AKTLCIIMGCFCLCWAPFFVTNIVDP. Position 279 (Asn-279) interacts with serotonin. Residues 284-290 lie on the Extracellular side of the membrane; it reads FIDYTVP. A helical membrane pass occupies residues 291–314; it reads GQLWTAFLWLGYINSGLNPFLYAF. The Cytoplasmic segment spans residues 315–388; that stretch reads LNKSFRRAFL…PLVAAQPIDT (74 aa).

The protein belongs to the G-protein coupled receptor 1 family. As to quaternary structure, interacts (via C-terminus 330-346 AA) with GRK5; this interaction is promoted by 5-HT (serotonin).

It is found in the cell membrane. The protein resides in the endosome membrane. Functionally, G-protein coupled receptor for 5-hydroxytryptamine (serotonin), a biogenic hormone that functions as a neurotransmitter, a hormone and a mitogen. Ligand binding causes a conformation change that triggers signaling via guanine nucleotide-binding proteins (G proteins) and modulates the activity of downstream effectors. HTR4 is coupled to G(s) G alpha proteins and mediates activation of adenylate cyclase activity. This chain is 5-hydroxytryptamine receptor 4 (HTR4), found in Cavia porcellus (Guinea pig).